We begin with the raw amino-acid sequence, 396 residues long: Carbamoyl phosphate synthase small chain (396 aa).

The segment at 1–204 (MTQHDNDPAW…WDKGFGQQDK (204 aa)) is CPSase. Positions 59, 256, and 258 each coordinate L-glutamine. One can recognise a Glutamine amidotransferase type-1 domain in the interval 208–396 (NVVAIDYGIK…AELMRQKKSA (189 aa)). Cysteine 285 (nucleophile) is an active-site residue. The L-glutamine site is built by leucine 286, glutamine 289, asparagine 327, glycine 329, and phenylalanine 330. Residues histidine 369 and glutamate 371 contribute to the active site.

It belongs to the CarA family. In terms of assembly, composed of two chains; the small (or glutamine) chain promotes the hydrolysis of glutamine to ammonia, which is used by the large (or ammonia) chain to synthesize carbamoyl phosphate. Tetramer of heterodimers (alpha,beta)4.

It catalyses the reaction hydrogencarbonate + L-glutamine + 2 ATP + H2O = carbamoyl phosphate + L-glutamate + 2 ADP + phosphate + 2 H(+). The enzyme catalyses L-glutamine + H2O = L-glutamate + NH4(+). The protein operates within amino-acid biosynthesis; L-arginine biosynthesis; carbamoyl phosphate from bicarbonate: step 1/1. It functions in the pathway pyrimidine metabolism; UMP biosynthesis via de novo pathway; (S)-dihydroorotate from bicarbonate: step 1/3. Small subunit of the glutamine-dependent carbamoyl phosphate synthetase (CPSase). CPSase catalyzes the formation of carbamoyl phosphate from the ammonia moiety of glutamine, carbonate, and phosphate donated by ATP, constituting the first step of 2 biosynthetic pathways, one leading to arginine and/or urea and the other to pyrimidine nucleotides. The small subunit (glutamine amidotransferase) binds and cleaves glutamine to supply the large subunit with the substrate ammonia. The sequence is that of Carbamoyl phosphate synthase small chain from Bradyrhizobium diazoefficiens (strain JCM 10833 / BCRC 13528 / IAM 13628 / NBRC 14792 / USDA 110).